The following is a 204-amino-acid chain: Putative AgrB-like protein (204 aa).

5 consecutive transmembrane segments (helical) span residues 51–73 (VYGI…SYLW), 87–107 (LNCT…FQNI), 111–131 (NWIV…FAPA), 151–168 (AMIG…IPFA), and 173–190 (LIMV…PLTY).

This sequence belongs to the AgrB family.

It is found in the cell membrane. May be involved in the proteolytic processing of a quorum sensing system signal molecule precursor. This Listeria innocua serovar 6a (strain ATCC BAA-680 / CLIP 11262) protein is Putative AgrB-like protein.